The sequence spans 130 residues: Small ribosomal subunit protein uS8 (130 aa).

Belongs to the universal ribosomal protein uS8 family. In terms of assembly, part of the 30S ribosomal subunit. Contacts proteins S5 and S12.

Its function is as follows. One of the primary rRNA binding proteins, it binds directly to 16S rRNA central domain where it helps coordinate assembly of the platform of the 30S subunit. The chain is Small ribosomal subunit protein uS8 from Shewanella baltica (strain OS223).